Here is a 421-residue protein sequence, read N- to C-terminus: Proton/sodium-glutamate symport protein (421 aa).

Topologically, residues 1 to 3 are cytoplasmic; it reads MRK. A helical membrane pass occupies residues 4–24; that stretch reads IGLAWQIFIGLILGIIVGAIF. The Extracellular portion of the chain corresponds to 25-43; the sequence is YGNPKVAAYLQPIGDIFLR. A helical transmembrane segment spans residues 44–64; the sequence is LIKMIVIPIVISSLVVGVASV. At 65–77 the chain is on the cytoplasmic side; that stretch reads GDLKKLGKLGGKT. A helical transmembrane segment spans residues 78 to 98; it reads IIYFEIITTIAIVVGLLAANI. Residues 99–148 lie on the Extracellular side of the membrane; sequence FQPGAGVNMKSLEKTDIQSYVDTTNEVQHHSMVETFVNIVPKNIFESLST. The chain crosses the membrane as a helical span at residues 149-169; the sequence is GDMLPIIFFSVMFGLGVAAIG. Residues 170–198 lie on the Cytoplasmic side of the membrane; it reads EKGKPVLQFFQGTAEAMFYVTNQIMKFAP. A helical membrane pass occupies residues 199–219; sequence FGVFALIGVTVSKFGVESLIP. Residues 220–222 are Extracellular-facing; that stretch reads LSK. A helical membrane pass occupies residues 223–243; it reads LVIVVYATMLFFIFAVLGGVA. Residue K244 is a topological domain, cytoplasmic. The chain crosses the membrane as a helical span at residues 245-265; that stretch reads LFGINIFHIIKILKDELILAY. Topologically, residues 266-306 are extracellular; sequence STASSETVLPRIMDKMEKFGCPKAITSFVIPTGYSFNLDGS. Residues 307–327 form a helical membrane-spanning segment; it reads TLYQALAAIFIAQLYGIDMSV. The Cytoplasmic portion of the chain corresponds to 328-330; it reads SQQ. Transmembrane regions (helical) follow at residues 331–351 and 352–372; these read ISLLLVLMVTSKGIAGVPGVS and FVVLLATLGTVGIPVEGLAFI. The Cytoplasmic portion of the chain corresponds to 373-421; it reads AGIDRILDMARTAVNVIGNSLAAIIMSKWEGQYNEEKGKQYLAELQQSA.

Belongs to the dicarboxylate/amino acid:cation symporter (DAACS) (TC 2.A.23) family. Homotrimer.

The protein localises to the cell membrane. Functionally, this carrier protein is part of the Na(+)-dependent, binding-protein-independent glutamate-aspartate transport system. In Bacillus caldotenax, this protein is Proton/sodium-glutamate symport protein (gltT).